The primary structure comprises 202 residues: Ribonuclease HII (202 aa).

The RNase H type-2 domain occupies 15 to 202 (QGVAGVDEAG…APIKAFGISA (188 aa)). Residues Asp-21, Glu-22, and Asp-113 each contribute to the a divalent metal cation site.

This sequence belongs to the RNase HII family. The cofactor is Mn(2+). It depends on Mg(2+) as a cofactor.

Its subcellular location is the cytoplasm. It catalyses the reaction Endonucleolytic cleavage to 5'-phosphomonoester.. Functionally, endonuclease that specifically degrades the RNA of RNA-DNA hybrids. This Bordetella avium (strain 197N) protein is Ribonuclease HII.